The following is a 506-amino-acid chain: Tabersonine 3-oxygenase (506 aa).

At Met-1 to Glu-5 the chain is on the lumenal side. A helical membrane pass occupies residues Ser-6–Leu-26. Over Arg-27 to Ala-506 the chain is Cytoplasmic. Cys-450 contacts heme.

Belongs to the cytochrome P450 family. The cofactor is heme. As to expression, expressed in leaf epidermis.

Its subcellular location is the endoplasmic reticulum membrane. It catalyses the reaction 16-methoxytabersonine + reduced [NADPH--hemoprotein reductase] + O2 = (3R)-1,2-didehydro-3-hydroxy-16-methoxy-2,3-dihydrotabersonine + oxidized [NADPH--hemoprotein reductase] + H2O + H(+). The enzyme catalyses (-)-tabersonine + reduced [NADPH--hemoprotein reductase] + O2 = (3R)-1,2-didehydro-3-hydroxy-2,3-dihydrotabersonine + oxidized [NADPH--hemoprotein reductase] + H2O + H(+). It functions in the pathway alkaloid biosynthesis; vindoline biosynthesis. In terms of biological role, cytochrome P450 catalyzing the monooxygenation of 16-methoxytabersonine, 16-hydroxytabersonine and tabersonine, but not of 2,3-dihydrotabersonine. Converts the C2,C3 alkene of tabersonine and 16-methoxytabersonine to the epoxides, which then spontaneously open to form the corresponding imine alcohols. Inactive in converting amyrin to ursolic acid. This chain is Tabersonine 3-oxygenase, found in Catharanthus roseus (Madagascar periwinkle).